Here is a 475-residue protein sequence, read N- to C-terminus: Trifunctional enzyme subunit beta, mitochondrial (475 aa).

The transit peptide at 1 to 34 (MTTILTSTFRNLSTTSKWALRFSVRPLSCSSQVQ) directs the protein to the mitochondrion. Lys-53 carries the N6-succinyllysine modification. At Lys-73 the chain carries N6-acetyllysine; alternate. N6-succinyllysine; alternate is present on Lys-73. Cys-139 acts as the Acyl-thioester intermediate in catalysis. The stretch at 174–221 (IRHSRNMRKMMLDLNKAKTLAQRLSLLTKFRLNFLSPELPAVAEFSTN) is an intramembrane region. The residue at position 189 (Lys-189) is an N6-acetyllysine; alternate. Lys-189 carries the N6-succinyllysine; alternate modification. Residues Lys-191, Lys-273, and Lys-292 each carry the N6-succinyllysine modification. At Lys-294 the chain carries N6-acetyllysine; alternate. The residue at position 294 (Lys-294) is an N6-succinyllysine; alternate. N6-acetyllysine is present on Lys-299. Lys-333 is modified (N6-acetyllysine; alternate). Residue Lys-333 is modified to N6-succinyllysine; alternate. Lys-349 and Lys-362 each carry N6-acetyllysine. The active-site Proton donor/acceptor is Cys-459.

It belongs to the thiolase-like superfamily. Thiolase family. In terms of assembly, heterotetramer of 2 alpha/HADHA and 2 beta/HADHB subunits; forms the mitochondrial trifunctional enzyme. Also purified as higher order heterooligomers including a 4 alpha/HADHA and 4 beta/HADHB heterooligomer which physiological significance remains unclear. The mitochondrial trifunctional enzyme interacts with MTLN. Interacts with RSAD2/viperin.

Its subcellular location is the mitochondrion. The protein resides in the mitochondrion inner membrane. It is found in the mitochondrion outer membrane. It localises to the endoplasmic reticulum. It catalyses the reaction an acyl-CoA + acetyl-CoA = a 3-oxoacyl-CoA + CoA. The catalysed reaction is butanoyl-CoA + acetyl-CoA = 3-oxohexanoyl-CoA + CoA. The enzyme catalyses hexanoyl-CoA + acetyl-CoA = 3-oxooctanoyl-CoA + CoA. It carries out the reaction octanoyl-CoA + acetyl-CoA = 3-oxodecanoyl-CoA + CoA. It catalyses the reaction decanoyl-CoA + acetyl-CoA = 3-oxododecanoyl-CoA + CoA. The catalysed reaction is dodecanoyl-CoA + acetyl-CoA = 3-oxotetradecanoyl-CoA + CoA. The enzyme catalyses tetradecanoyl-CoA + acetyl-CoA = 3-oxohexadecanoyl-CoA + CoA. The protein operates within lipid metabolism; fatty acid beta-oxidation. Mitochondrial trifunctional enzyme catalyzes the last three of the four reactions of the mitochondrial beta-oxidation pathway. The mitochondrial beta-oxidation pathway is the major energy-producing process in tissues and is performed through four consecutive reactions breaking down fatty acids into acetyl-CoA. Among the enzymes involved in this pathway, the trifunctional enzyme exhibits specificity for long-chain fatty acids. Mitochondrial trifunctional enzyme is a heterotetrameric complex composed of two proteins, the trifunctional enzyme subunit alpha/HADHA carries the 2,3-enoyl-CoA hydratase and the 3-hydroxyacyl-CoA dehydrogenase activities, while the trifunctional enzyme subunit beta/HADHB described here bears the 3-ketoacyl-CoA thiolase activity. In Rattus norvegicus (Rat), this protein is Trifunctional enzyme subunit beta, mitochondrial (Hadhb).